Here is a 303-residue protein sequence, read N- to C-terminus: Acetyl-coenzyme A carboxylase carboxyl transferase subunit beta (303 aa).

In terms of domain architecture, CoA carboxyltransferase N-terminal spans L29 to A298.

It belongs to the AccD/PCCB family. As to quaternary structure, acetyl-CoA carboxylase is a heterohexamer composed of biotin carboxyl carrier protein (AccB), biotin carboxylase (AccC) and two subunits each of ACCase subunit alpha (AccA) and ACCase subunit beta (AccD).

It localises to the cytoplasm. It catalyses the reaction N(6)-carboxybiotinyl-L-lysyl-[protein] + acetyl-CoA = N(6)-biotinyl-L-lysyl-[protein] + malonyl-CoA. It functions in the pathway lipid metabolism; malonyl-CoA biosynthesis; malonyl-CoA from acetyl-CoA: step 1/1. Component of the acetyl coenzyme A carboxylase (ACC) complex. Biotin carboxylase (BC) catalyzes the carboxylation of biotin on its carrier protein (BCCP) and then the CO(2) group is transferred by the transcarboxylase to acetyl-CoA to form malonyl-CoA. The chain is Acetyl-coenzyme A carboxylase carboxyl transferase subunit beta from Methylobacterium sp. (strain 4-46).